A 358-amino-acid polypeptide reads, in one-letter code: Putative zinc metalloprotease BH06270 (358 aa).

Histidine 7 is a Zn(2+) binding site. Glutamate 8 is a catalytic residue. Position 11 (histidine 11) interacts with Zn(2+). Helical transmembrane passes span 89 to 111, 282 to 304, and 332 to 354; these read ATVF…FFFF, FLSL…LFPI, and IIFR…NDYF. The region spanning 102–177 is the PDZ domain; sequence TVVILTFFFF…IEFKMERSGQ (76 aa).

Belongs to the peptidase M50B family. It depends on Zn(2+) as a cofactor.

The protein localises to the cell inner membrane. In Bartonella henselae (strain ATCC 49882 / DSM 28221 / CCUG 30454 / Houston 1) (Rochalimaea henselae), this protein is Putative zinc metalloprotease BH06270.